Reading from the N-terminus, the 235-residue chain is MQQHLKYKIMTNIKHLAIIMDGNARWADQHNLTKSEGHKAGADKIRELLPEFINLNIPYITLYTFSSENWQRSSTEVDFLIKLLSIYFKNELNSLHKNGVKIKVIGRLNLLSSSLQKQINNAIELTKNNNKITLCIAFSYGSRQEIVDACTKIIASGKKEISESDIGHALYDPEMPDVDLLIRPGGVYRISNFLLWQAAYAELYFSPKYWPAFNKDDIIEAINDYSKRKRTFGKR.

The active site involves Asp21. Residue Asp21 participates in Mg(2+) binding. Substrate-binding positions include Gly22–Arg25, Trp26, Lys34, His38, and Ser66–Glu68. The active-site Proton acceptor is Asn69. Residues Trp70, Arg72, Arg183, and Arg189–Ser191 contribute to the substrate site. Residue Glu202 coordinates Mg(2+).

Belongs to the UPP synthase family. In terms of assembly, homodimer. It depends on Mg(2+) as a cofactor.

Functionally, catalyzes the condensation of isopentenyl diphosphate (IPP) with allylic pyrophosphates generating different type of terpenoids. In Rickettsia felis (strain ATCC VR-1525 / URRWXCal2) (Rickettsia azadi), this protein is Isoprenyl transferase.